Here is a 215-residue protein sequence, read N- to C-terminus: Cytochrome b6 (215 aa).

Residues 32–52 (IFYCLGGITLTCFLVQVATGF) traverse the membrane as a helical segment. A heme c-binding site is contributed by Cys35. Heme b-binding residues include His86 and His100. 3 helical membrane passes run 90-110 (ASMM…TGGF), 116-136 (LTWV…VTGY), and 186-206 (LHTF…FPMI). Heme b contacts are provided by His187 and His202.

This sequence belongs to the cytochrome b family. PetB subfamily. In terms of assembly, the 4 large subunits of the cytochrome b6-f complex are cytochrome b6, subunit IV (17 kDa polypeptide, PetD), cytochrome f and the Rieske protein, while the 4 small subunits are PetG, PetL, PetM and PetN. The complex functions as a dimer. The cofactor is heme b. Heme c is required as a cofactor.

It localises to the plastid. The protein localises to the chloroplast thylakoid membrane. Its function is as follows. Component of the cytochrome b6-f complex, which mediates electron transfer between photosystem II (PSII) and photosystem I (PSI), cyclic electron flow around PSI, and state transitions. The polypeptide is Cytochrome b6 (Liriodendron tulipifera (Tuliptree)).